The primary structure comprises 92 residues: MARSIKKGPFADDHLKKKVEAQSGSEKKQVIKTWSRRSTIFPDFIGHTFAVYDGRKHVPVFVTEDMVGHKLGEFAPTRTFKGHAADDKKTRR.

The tract at residues 1 to 27 (MARSIKKGPFADDHLKKKVEAQSGSEK) is disordered. Basic and acidic residues predominate over residues 9–27 (PFADDHLKKKVEAQSGSEK).

It belongs to the universal ribosomal protein uS19 family.

Its function is as follows. Protein S19 forms a complex with S13 that binds strongly to the 16S ribosomal RNA. In Staphylococcus saprophyticus subsp. saprophyticus (strain ATCC 15305 / DSM 20229 / NCIMB 8711 / NCTC 7292 / S-41), this protein is Small ribosomal subunit protein uS19.